A 126-amino-acid chain; its full sequence is Fatty acid-binding protein 10-A, liver basic (126 aa).

Cholate-binding residues include Lys-57, Lys-77, His-99, and Gln-101.

It belongs to the calycin superfamily. Fatty-acid binding protein (FABP) family. As to expression, expressed in the developing embryonic liver from 48 hpf. Also expressed in the liver of 5-day-old larvae. In adults, primarily expressed in the liver, with weak expression in the testis and intestine.

Its subcellular location is the cytoplasm. Functionally, binds hydrophobic ligands, such as cholate, in the cytoplasm. May be involved in intracellular lipid transport. Binds one cholate per subunit. This chain is Fatty acid-binding protein 10-A, liver basic (fabp10a), found in Danio rerio (Zebrafish).